The primary structure comprises 547 residues: Chaperonin GroEL (547 aa).

ATP-binding positions include T30–P33, K51, D87–T91, G415, N479–A481, and D495.

This sequence belongs to the chaperonin (HSP60) family. As to quaternary structure, forms a cylinder of 14 subunits composed of two heptameric rings stacked back-to-back. Interacts with the co-chaperonin GroES.

The protein resides in the cytoplasm. The enzyme catalyses ATP + H2O + a folded polypeptide = ADP + phosphate + an unfolded polypeptide.. Functionally, together with its co-chaperonin GroES, plays an essential role in assisting protein folding. The GroEL-GroES system forms a nano-cage that allows encapsulation of the non-native substrate proteins and provides a physical environment optimized to promote and accelerate protein folding. The protein is Chaperonin GroEL of Delftia acidovorans (strain DSM 14801 / SPH-1).